The sequence spans 538 residues: Bifunctional purine biosynthesis protein PurH (538 aa).

One can recognise an MGS-like domain in the interval 11-158 (PDLHRVRRAL…KNHAYTGVVT (148 aa)).

Belongs to the PurH family.

It carries out the reaction (6R)-10-formyltetrahydrofolate + 5-amino-1-(5-phospho-beta-D-ribosyl)imidazole-4-carboxamide = 5-formamido-1-(5-phospho-D-ribosyl)imidazole-4-carboxamide + (6S)-5,6,7,8-tetrahydrofolate. The catalysed reaction is IMP + H2O = 5-formamido-1-(5-phospho-D-ribosyl)imidazole-4-carboxamide. It participates in purine metabolism; IMP biosynthesis via de novo pathway; 5-formamido-1-(5-phospho-D-ribosyl)imidazole-4-carboxamide from 5-amino-1-(5-phospho-D-ribosyl)imidazole-4-carboxamide (10-formyl THF route): step 1/1. It functions in the pathway purine metabolism; IMP biosynthesis via de novo pathway; IMP from 5-formamido-1-(5-phospho-D-ribosyl)imidazole-4-carboxamide: step 1/1. The chain is Bifunctional purine biosynthesis protein PurH from Bartonella bacilliformis (strain ATCC 35685 / KC583 / Herrer 020/F12,63).